The following is a 212-amino-acid chain: Leucine efflux protein (212 aa).

6 helical membrane-spanning segments follow: residues 12–32 (TYLV…LFVL), 49–69 (GVFI…ATLI), 71–91 (TTPI…LYLG), 122–142 (ILSL…VQFI), 153–173 (FFIL…FLII), and 188–208 (LAKV…ARLA).

Belongs to the Rht family.

It localises to the cell inner membrane. The enzyme catalyses L-leucine(in) + H(+)(out) = L-leucine(out) + H(+)(in). Its function is as follows. Exporter of leucine. The chain is Leucine efflux protein (leuE) from Escherichia coli O6:K15:H31 (strain 536 / UPEC).